Here is a 229-residue protein sequence, read N- to C-terminus: UPF0758 protein Ppro_3582 (229 aa).

The segment at 1–20 is disordered; it reads MCPGIREWPEDERPREKMLR. Residues 7-19 show a composition bias toward basic and acidic residues; that stretch reads EWPEDERPREKML. In terms of domain architecture, MPN spans 107-229; the sequence is RFTSPRQVFD…YLSFVERGVL (123 aa). Zn(2+) contacts are provided by histidine 178, histidine 180, and aspartate 191. The JAMM motif motif lies at 178 to 191; it reads HNHPTGDPTPSQED.

This sequence belongs to the UPF0758 family.

This is UPF0758 protein Ppro_3582 from Pelobacter propionicus (strain DSM 2379 / NBRC 103807 / OttBd1).